The sequence spans 413 residues: Argininosuccinate synthase (413 aa).

ATP-binding positions include 14–22 (AYSGGLDTS) and A41. L-citrulline-binding residues include Y94 and S99. G124 is an ATP binding site. Positions 126, 130, and 131 each coordinate L-aspartate. Residue N130 coordinates L-citrulline. Residues R134, S185, S194, E270, and Y282 each contribute to the L-citrulline site.

Belongs to the argininosuccinate synthase family. Type 1 subfamily. In terms of assembly, homotetramer.

It is found in the cytoplasm. It carries out the reaction L-citrulline + L-aspartate + ATP = 2-(N(omega)-L-arginino)succinate + AMP + diphosphate + H(+). It participates in amino-acid biosynthesis; L-arginine biosynthesis; L-arginine from L-ornithine and carbamoyl phosphate: step 2/3. The sequence is that of Argininosuccinate synthase from Hyphomonas neptunium (strain ATCC 15444).